Consider the following 224-residue polypeptide: Ribonuclease 3 (224 aa).

One can recognise an RNase III domain in the interval 5-127; the sequence is LERLCRRLNY…ILAAIYLDGG (123 aa). Glu-40 is a Mg(2+) binding site. The active site involves Asp-44. Residues Asp-113 and Glu-116 each coordinate Mg(2+). The active site involves Glu-116. Residues 154-224 form the DRBM domain; that stretch reads DAKTQLQEFL…AKAMLEQLQG (71 aa).

The protein belongs to the ribonuclease III family. As to quaternary structure, homodimer. Requires Mg(2+) as cofactor.

The protein localises to the cytoplasm. It catalyses the reaction Endonucleolytic cleavage to 5'-phosphomonoester.. Its function is as follows. Digests double-stranded RNA. Involved in the processing of primary rRNA transcript to yield the immediate precursors to the large and small rRNAs (23S and 16S). Processes some mRNAs, and tRNAs when they are encoded in the rRNA operon. Processes pre-crRNA and tracrRNA of type II CRISPR loci if present in the organism. This is Ribonuclease 3 from Legionella pneumophila subsp. pneumophila (strain Philadelphia 1 / ATCC 33152 / DSM 7513).